The chain runs to 861 residues: Bifunctional uridylyltransferase/uridylyl-removing enzyme (861 aa).

The interval 1 to 322 (MHTAAAATPA…FPTELGITRT (322 aa)) is uridylyltransferase. The tract at residues 323-679 (INGRFVERQG…ARISPVGEGL (357 aa)) is uridylyl-removing. One can recognise an HD domain in the interval 441–557 (VDQHILMVVR…RHFADQVGSE (117 aa)). 2 consecutive ACT domains span residues 680–763 (QVAV…AEPP) and 792–861 (LLSL…ALAI).

It belongs to the GlnD family. The cofactor is Mg(2+).

It catalyses the reaction [protein-PII]-L-tyrosine + UTP = [protein-PII]-uridylyl-L-tyrosine + diphosphate. It carries out the reaction [protein-PII]-uridylyl-L-tyrosine + H2O = [protein-PII]-L-tyrosine + UMP + H(+). Its activity is regulated as follows. Uridylyltransferase (UTase) activity is inhibited by glutamine, while glutamine activates uridylyl-removing (UR) activity. In terms of biological role, modifies, by uridylylation and deuridylylation, the PII regulatory proteins (GlnB and homologs), in response to the nitrogen status of the cell that GlnD senses through the glutamine level. Under low glutamine levels, catalyzes the conversion of the PII proteins and UTP to PII-UMP and PPi, while under higher glutamine levels, GlnD hydrolyzes PII-UMP to PII and UMP (deuridylylation). Thus, controls uridylylation state and activity of the PII proteins, and plays an important role in the regulation of nitrogen assimilation and metabolism. In Ralstonia nicotianae (strain ATCC BAA-1114 / GMI1000) (Ralstonia solanacearum), this protein is Bifunctional uridylyltransferase/uridylyl-removing enzyme.